The chain runs to 354 residues: Selenide, water dikinase (354 aa).

Residue U21 is part of the active site. Position 21 (U21) is a non-standard amino acid, selenocysteine. ATP contacts are provided by residues K24 and 51-53 (TSD). D54 contacts Mg(2+). ATP-binding positions include D71, D94, and 141–143 (GHT). Position 94 (D94) interacts with Mg(2+). D229 lines the Mg(2+) pocket.

It belongs to the selenophosphate synthase 1 family. Class I subfamily. Homodimer. Mg(2+) serves as cofactor.

It carries out the reaction hydrogenselenide + ATP + H2O = selenophosphate + AMP + phosphate + 2 H(+). Its function is as follows. Synthesizes selenophosphate from selenide and ATP. The chain is Selenide, water dikinase from Treponema denticola (strain ATCC 35405 / DSM 14222 / CIP 103919 / JCM 8153 / KCTC 15104).